Here is a 189-residue protein sequence, read N- to C-terminus: Receptor activity-modifying protein 2 (189 aa).

A signal peptide spans Met1–Ala44. Residues Ser45–Glu157 are Extracellular-facing. Residues Leu49–His61 show a composition bias toward polar residues. The tract at residues Leu49–Ser69 is disordered. Residues Asn50, Asn58, Asn99, and Asn144 are each glycosylated (N-linked (GlcNAc...) asparagine). 2 cysteine pairs are disulfide-bonded: Cys83–Cys113 and Cys98–Cys145. Residues Asp158–Val179 traverse the membrane as a helical segment. Residues Trp180–Ala189 lie on the Cytoplasmic side of the membrane.

Belongs to the RAMP family. Heterodimer of CALCRL and RAMP2; the interaction forms the receptor complex for adrenomedullin/ADM. Heterodimer of CALCR and RAMP2; interaction forms the AMYR2 receptor complex for calcitonin/CALC and amylin/IAPP. In terms of tissue distribution, ubiquitous. Expressed predominantly in embryonic brain, lung and gut and in adult heart, lung, skeletal muscle and brain.

Its subcellular location is the cell membrane. Accessory protein that interacts with and modulates the function of G-protein coupled receptors including calcitonin gene-related peptide type 1 receptor (CALCRL) and calcitonin receptor (CALCR). Required for the transport of CALCRL to the plasma membrane. Together with CALCRL, form a receptor complex for adrenomedullin/ADM. Together with CALCR, act as a receptor complex for calcitonin/CT/CALC. Together with CALCR, also act as a receptor complex for amylin/IAPP. The protein is Receptor activity-modifying protein 2 of Mus musculus (Mouse).